Here is a 219-residue protein sequence, read N- to C-terminus: Uracil-DNA glycosylase (219 aa).

The active-site Proton acceptor is Asp-61.

Belongs to the uracil-DNA glycosylase (UDG) superfamily. UNG family.

It is found in the cytoplasm. The enzyme catalyses Hydrolyzes single-stranded DNA or mismatched double-stranded DNA and polynucleotides, releasing free uracil.. Excises uracil residues from the DNA which can arise as a result of misincorporation of dUMP residues by DNA polymerase or due to deamination of cytosine. This Neisseria meningitidis serogroup A / serotype 4A (strain DSM 15465 / Z2491) protein is Uracil-DNA glycosylase.